We begin with the raw amino-acid sequence, 62 residues long: Ranacyclin-T (62 aa).

A signal peptide spans 1–22; it reads MFTMKKTLLVLFFLGVVSLSLC. A propeptide spanning residues 23 to 43 is cleaved from the precursor; that stretch reads VEERDADEEDGGEVMEEEVKR. Cys49 and Cys59 are joined by a disulfide. Lys60 is modified (lysine amide).

This sequence belongs to the frog skin active peptide (FSAP) family. Brevinin subfamily. As to expression, expressed by the skin granular glands.

The protein localises to the secreted. Its function is as follows. Has antibacterial activity against Gram-positive bacteria B.megaterium Bm11, S.lentus and M.luteus, and Gram-negative bacteria E.coli D22, Y.pseudotuberculosis YP III and P.syringae pv tabaci, and antifungal activity against C.albicans ATCC 10231, C.tropicalis, C.guiller-mondii and P.nicotianae spores. Has weak hemolytic activity. The mature peptide inserts into the hydrophobic core of the bacterial cell membrane and increases permeability without disrupting membrane integrity. Probably binds to the outer membrane surface before aggregating to form transmembrane pores. The protein is Ranacyclin-T (RNCT) of Rana temporaria (European common frog).